A 150-amino-acid polypeptide reads, in one-letter code: Large ribosomal subunit protein bL9 (150 aa).

The protein belongs to the bacterial ribosomal protein bL9 family.

Binds to the 23S rRNA. In Corynebacterium glutamicum (strain R), this protein is Large ribosomal subunit protein bL9.